The following is a 446-amino-acid chain: D(1A) dopamine receptor (446 aa).

At 1–22 the chain is on the extracellular side; that stretch reads MPLNDTTMDRRGLVVERDFSFR. N-linked (GlcNAc...) asparagine glycosylation is present at Asn4. Residues 23–48 traverse the membrane as a helical segment; sequence ILTACFLSLLILSTLLGNTLVCAAVI. Residues 49–59 are Cytoplasmic-facing; sequence RFRHLRSKVTN. A helical transmembrane segment spans residues 60-86; the sequence is FFVISLAVSDLLVAVLVMPWKAVAEIA. The Extracellular portion of the chain corresponds to 87–95; sequence GFWPFGSFC. An intrachain disulfide couples Cys95 to Cys185. Residues 96–118 form a helical membrane-spanning segment; sequence NIWVAFDIMCSTASILNLCVISV. Topologically, residues 119 to 137 are cytoplasmic; the sequence is DRYWAISSPFRYERKMTPK. Residues 138 to 162 traverse the membrane as a helical segment; sequence AAFILISVAWTLSVLISFIPVQLNW. The Extracellular segment spans residues 163-191; that stretch reads HKARPLSSPDGNVSSQDETMDNCDSSLSR. Residues 192–217 traverse the membrane as a helical segment; it reads TYAISSSLISFYIPVAIMIVTYTRIY. Residues 218 to 271 are Cytoplasmic-facing; that stretch reads RIAQKQIRRISALERAAVHAKNCQNTTGNGANVECSQPESSFKMSFKRETKVLK. Residues 272–298 traverse the membrane as a helical segment; that stretch reads TLSVIMGVFVCCWLPFFILNCMVPFCE. Over 299 to 315 the chain is Extracellular; the sequence is SDLPSGETKPFCIDSIT. A helical transmembrane segment spans residues 316 to 340; the sequence is FDVFVWFGWANSSLNPIIYAFNADF. Topologically, residues 341–446 are cytoplasmic; that stretch reads RKAFSTLLGC…PITQNGQHKT (106 aa). 2 S-palmitoyl cysteine lipidation sites follow: Cys350 and Cys354.

Belongs to the G-protein coupled receptor 1 family. Interacts with DNAJC14 via its C-terminus.

The protein localises to the cell membrane. It is found in the endoplasmic reticulum membrane. Its subcellular location is the cell projection. It localises to the cilium membrane. The protein resides in the dendrite. The protein localises to the dendritic spine. This is one of the five types (D1 to D5) of receptors for dopamine. The activity of this receptor is mediated by G proteins which activate adenylyl cyclase. This Didelphis virginiana (North American opossum) protein is D(1A) dopamine receptor (DRD1).